Here is a 144-residue protein sequence, read N- to C-terminus: Large ribosomal subunit protein uL13 (144 aa).

The protein belongs to the universal ribosomal protein uL13 family. In terms of assembly, part of the 50S ribosomal subunit.

Its function is as follows. This protein is one of the early assembly proteins of the 50S ribosomal subunit, although it is not seen to bind rRNA by itself. It is important during the early stages of 50S assembly. The sequence is that of Large ribosomal subunit protein uL13 from Nitrosospira multiformis (strain ATCC 25196 / NCIMB 11849 / C 71).